The following is a 157-amino-acid chain: SsrA-binding protein (157 aa).

The protein belongs to the SmpB family.

The protein localises to the cytoplasm. In terms of biological role, required for rescue of stalled ribosomes mediated by trans-translation. Binds to transfer-messenger RNA (tmRNA), required for stable association of tmRNA with ribosomes. tmRNA and SmpB together mimic tRNA shape, replacing the anticodon stem-loop with SmpB. tmRNA is encoded by the ssrA gene; the 2 termini fold to resemble tRNA(Ala) and it encodes a 'tag peptide', a short internal open reading frame. During trans-translation Ala-aminoacylated tmRNA acts like a tRNA, entering the A-site of stalled ribosomes, displacing the stalled mRNA. The ribosome then switches to translate the ORF on the tmRNA; the nascent peptide is terminated with the 'tag peptide' encoded by the tmRNA and targeted for degradation. The ribosome is freed to recommence translation, which seems to be the essential function of trans-translation. The chain is SsrA-binding protein from Chlorobaculum tepidum (strain ATCC 49652 / DSM 12025 / NBRC 103806 / TLS) (Chlorobium tepidum).